A 232-amino-acid polypeptide reads, in one-letter code: Orotate phosphoribosyltransferase (232 aa).

Residues Arg-107, Lys-108, Lys-111, His-113, and 133–141 (EDLTTAGGS) each bind 5-phospho-alpha-D-ribose 1-diphosphate. Residue Thr-137 participates in orotate binding.

The protein belongs to the purine/pyrimidine phosphoribosyltransferase family. PyrE subfamily. In terms of assembly, homodimer. Requires Mg(2+) as cofactor.

The enzyme catalyses orotidine 5'-phosphate + diphosphate = orotate + 5-phospho-alpha-D-ribose 1-diphosphate. It participates in pyrimidine metabolism; UMP biosynthesis via de novo pathway; UMP from orotate: step 1/2. Functionally, catalyzes the transfer of a ribosyl phosphate group from 5-phosphoribose 1-diphosphate to orotate, leading to the formation of orotidine monophosphate (OMP). This Rhizobium rhizogenes (strain K84 / ATCC BAA-868) (Agrobacterium radiobacter) protein is Orotate phosphoribosyltransferase.